The primary structure comprises 251 residues: 5'-nucleotidase SurE (251 aa).

Residues aspartate 8, aspartate 9, serine 40, and asparagine 95 each contribute to the a divalent metal cation site.

The protein belongs to the SurE nucleotidase family. A divalent metal cation serves as cofactor.

The protein resides in the cytoplasm. The enzyme catalyses a ribonucleoside 5'-phosphate + H2O = a ribonucleoside + phosphate. Nucleotidase that shows phosphatase activity on nucleoside 5'-monophosphates. This chain is 5'-nucleotidase SurE, found in Desulfitobacterium hafniense (strain DSM 10664 / DCB-2).